Consider the following 92-residue polypeptide: UPF0728 protein (92 aa).

This sequence belongs to the UPF0728 family.

The polypeptide is UPF0728 protein (Branchiostoma floridae (Florida lancelet)).